A 432-amino-acid polypeptide reads, in one-letter code: Adenylosuccinate synthetase (432 aa).

GTP contacts are provided by residues 13 to 19 and 41 to 43; these read GDEGKGK and GHT. Residue Asp14 is the Proton acceptor of the active site. Residues Asp14 and Gly41 each coordinate Mg(2+). IMP-binding positions include 14 to 17, 39 to 42, Thr130, Arg144, Gln225, Thr240, and Arg304; these read DEGK and NAGH. Residue His42 is the Proton donor of the active site. Substrate is bound at residue 300-306; the sequence is ATTGRRR. Residues Arg306, 332–334, and 415–417 contribute to the GTP site; these read KLD and STG.

Belongs to the adenylosuccinate synthetase family. In terms of assembly, homodimer. It depends on Mg(2+) as a cofactor.

It localises to the cytoplasm. It catalyses the reaction IMP + L-aspartate + GTP = N(6)-(1,2-dicarboxyethyl)-AMP + GDP + phosphate + 2 H(+). Its pathway is purine metabolism; AMP biosynthesis via de novo pathway; AMP from IMP: step 1/2. Plays an important role in the de novo pathway of purine nucleotide biosynthesis. Catalyzes the first committed step in the biosynthesis of AMP from IMP. The sequence is that of Adenylosuccinate synthetase from Edwardsiella ictaluri (strain 93-146).